The sequence spans 294 residues: Ribosomal RNA small subunit methyltransferase A (294 aa).

The S-adenosyl-L-methionine site is built by asparagine 31, leucine 33, glycine 58, glutamate 79, aspartate 104, and asparagine 129.

The protein belongs to the class I-like SAM-binding methyltransferase superfamily. rRNA adenine N(6)-methyltransferase family. RsmA subfamily.

The protein resides in the cytoplasm. It catalyses the reaction adenosine(1518)/adenosine(1519) in 16S rRNA + 4 S-adenosyl-L-methionine = N(6)-dimethyladenosine(1518)/N(6)-dimethyladenosine(1519) in 16S rRNA + 4 S-adenosyl-L-homocysteine + 4 H(+). In terms of biological role, specifically dimethylates two adjacent adenosines (A1518 and A1519) in the loop of a conserved hairpin near the 3'-end of 16S rRNA in the 30S particle. May play a critical role in biogenesis of 30S subunits. The chain is Ribosomal RNA small subunit methyltransferase A from Oceanobacillus iheyensis (strain DSM 14371 / CIP 107618 / JCM 11309 / KCTC 3954 / HTE831).